Here is a 502-residue protein sequence, read N- to C-terminus: Cardiolipin synthase (502 aa).

A run of 3 helical transmembrane segments spans residues 7 to 27, 29 to 49, and 59 to 79; these read VIIF…YWEG, LLGG…FVIS, and ITWL…YLMF. PLD phosphodiesterase domains are found at residues 237–264 and 415–442; these read INFR…GDEY and SKGF…DMRS. Catalysis depends on residues H242, K244, D249, H420, K422, and D427.

This sequence belongs to the phospholipase D family. Cardiolipin synthase subfamily.

Its subcellular location is the cell membrane. It carries out the reaction 2 a 1,2-diacyl-sn-glycero-3-phospho-(1'-sn-glycerol) = a cardiolipin + glycerol. Functionally, catalyzes the reversible phosphatidyl group transfer from one phosphatidylglycerol molecule to another to form cardiolipin (CL) (diphosphatidylglycerol) and glycerol. The sequence is that of Cardiolipin synthase (cls) from Geobacillus sp. (strain WCH70).